The primary structure comprises 284 residues: Ribose-phosphate pyrophosphokinase 1 (284 aa).

34–36 (DGE) contributes to the ATP binding site. Mg(2+) is bound by residues His126 and Asp163. The active site involves Lys186. D-ribose 5-phosphate-binding positions include Arg188, Asp211, and 215-219 (STGGT).

It belongs to the ribose-phosphate pyrophosphokinase family. Class III (archaeal) subfamily. Mg(2+) serves as cofactor.

It is found in the cytoplasm. It catalyses the reaction D-ribose 5-phosphate + ATP = 5-phospho-alpha-D-ribose 1-diphosphate + AMP + H(+). It participates in metabolic intermediate biosynthesis; 5-phospho-alpha-D-ribose 1-diphosphate biosynthesis; 5-phospho-alpha-D-ribose 1-diphosphate from D-ribose 5-phosphate (route I): step 1/1. Its function is as follows. Involved in the biosynthesis of the central metabolite phospho-alpha-D-ribosyl-1-pyrophosphate (PRPP) via the transfer of pyrophosphoryl group from ATP to 1-hydroxyl of ribose-5-phosphate (Rib-5-P). This chain is Ribose-phosphate pyrophosphokinase 1, found in Archaeoglobus fulgidus (strain ATCC 49558 / DSM 4304 / JCM 9628 / NBRC 100126 / VC-16).